The following is a 535-amino-acid chain: Unconventional prefoldin RPB5 interactor 1 (535 aa).

Residue Met1 is modified to N-acetylmethionine. Disordered regions lie at residues 1–23 (MEAPTVETPPDPSPPSAPAPALV), 223–330 (LLGE…VGDN), 352–383 (KNTTLKFSEKKEEAKRKRKNSTGSGHSAQELP), and 412–431 (SRSRENSVCSDTSESSAAEF). Positions 7–18 (ETPPDPSPPSAP) are enriched in pro residues. Composition is skewed to polar residues over residues 253–265 (TNVNAMHQVTDSH) and 276–296 (EPFSGQVNSQLNCSVNGSSSY). Positions 299–320 (DDDDDDDDDDDDDNIDDDDGDN) are enriched in acidic residues. Ser372 carries the post-translational modification Phosphoserine; by RPS6KB1. Thr373 is modified (phosphothreonine). Positions 417-427 (NSVCSDTSESS) are enriched in polar residues. The residue at position 442 (Ser442) is a Phosphoserine.

The protein belongs to the RNA polymerase II subunit 5-mediating protein family. As to quaternary structure, homodimer. Component of the PAQosome complex which is responsible for the biogenesis of several protein complexes and which consists of R2TP complex members RUVBL1, RUVBL2, RPAP3 and PIH1D1, URI complex members PFDN2, PFDN6, PDRG1, UXT and URI1 as well as ASDURF, POLR2E and DNAAF10/WDR92. Interacts with POLR2E/RPB5, RUVBL2 and RUVBL1. Interacts with PFDN2, PFDN4 and STAP1; the interactions are phosphorylation-dependent and occur in a growth-dependent manner in the mitochondrion. Interacts with UXT. Interacts with PPP1CC; the interaction is phosphorylation-dependent and occurs in a growth factor-dependent manner. Interacts (via the middle C-terminal region) with GTF2F1 and GTF2F2. Interacts with DMAP1. Interacts with TSC1 and TSC2. Interacts with PRPF8 and EFTUD2 in a ZNHIT2-dependent manner. Post-translationally, phosphorylated. Phosphorylation occurs essentially on serine residues. Phosphorylation occurs in response to androgen treatment in prostate cancer cells in a mTOR-dependent manner. Phosphorylated; hyperhosphorylated in mitochondria in a mTORC-dependent signaling pathway. Phosphorylated at Ser-372 by RPS6KB1 in a growth factor- and rapamycin-dependent manner. S6K1-mediated mitochondrial phosphorylation at Ser-372 disrupts the URI1-PPP1CC complex in the mitochondrion, relieves PPP1CC phosphatase inhibition activity and hence engages a negative feedback diminishing RPS6KB1 kinase activity, preventing sustained S6K1-dependent signaling. In terms of tissue distribution, ubiquitous. Expressed in ovarian cancers (at protein level). Expressed strongly in skeletal muscle. Expressed weakly in brain, heart, pancreas and in prostate epithelial cells.

It is found in the nucleus. The protein resides in the cytoplasm. The protein localises to the mitochondrion. It localises to the cell projection. Its subcellular location is the dendrite. In terms of biological role, involved in gene transcription regulation. Acts as a transcriptional repressor in concert with the corepressor UXT to regulate androgen receptor (AR) transcription. May act as a tumor suppressor to repress AR-mediated gene transcription and to inhibit anchorage-independent growth in prostate cancer cells. Required for cell survival in ovarian cancer cells. Together with UXT, associates with chromatin to the NKX3-1 promoter region. Antagonizes transcriptional modulation via hepatitis B virus X protein. Its function is as follows. Plays a central role in maintaining S6K1 signaling and BAD phosphorylation under normal growth conditions thereby protecting cells from potential deleterious effects of sustained S6K1 signaling. The URI1-PPP1CC complex acts as a central component of a negative feedback mechanism that counteracts excessive S6K1 survival signaling to BAD in response to growth factors. Mediates inhibition of PPP1CC phosphatase activity in mitochondria. Coordinates the regulation of nutrient-sensitive gene expression availability in a mTOR-dependent manner. Seems to be a scaffolding protein able to assemble a prefoldin-like complex that contains PFDs and proteins with roles in transcription and ubiquitination. The chain is Unconventional prefoldin RPB5 interactor 1 (URI1) from Homo sapiens (Human).